Reading from the N-terminus, the 420-residue chain is Gamma-glutamyl phosphate reductase (420 aa).

This sequence belongs to the gamma-glutamyl phosphate reductase family.

The protein resides in the cytoplasm. It carries out the reaction L-glutamate 5-semialdehyde + phosphate + NADP(+) = L-glutamyl 5-phosphate + NADPH + H(+). It participates in amino-acid biosynthesis; L-proline biosynthesis; L-glutamate 5-semialdehyde from L-glutamate: step 2/2. Functionally, catalyzes the NADPH-dependent reduction of L-glutamate 5-phosphate into L-glutamate 5-semialdehyde and phosphate. The product spontaneously undergoes cyclization to form 1-pyrroline-5-carboxylate. The protein is Gamma-glutamyl phosphate reductase of Streptococcus pneumoniae (strain ATCC 700669 / Spain 23F-1).